A 372-amino-acid polypeptide reads, in one-letter code: Glutamate 5-kinase (372 aa).

Position 14 (lysine 14) interacts with ATP. Residues serine 54, aspartate 141, and asparagine 153 each contribute to the substrate site. 173–174 (TD) is a binding site for ATP. Positions 280 to 358 (RGTLVLDDGA…EAIVRELGYM (79 aa)) constitute a PUA domain.

It belongs to the glutamate 5-kinase family.

Its subcellular location is the cytoplasm. It carries out the reaction L-glutamate + ATP = L-glutamyl 5-phosphate + ADP. The protein operates within amino-acid biosynthesis; L-proline biosynthesis; L-glutamate 5-semialdehyde from L-glutamate: step 1/2. Catalyzes the transfer of a phosphate group to glutamate to form L-glutamate 5-phosphate. The sequence is that of Glutamate 5-kinase from Pseudomonas syringae pv. tomato (strain ATCC BAA-871 / DC3000).